The sequence spans 146 residues: Large ribosomal subunit protein uL22 (146 aa).

The interval 1-39 (MAETQTTTPKKKAERRAPPPARARKNRPAAPAPGPHASL) is disordered.

This sequence belongs to the universal ribosomal protein uL22 family. Part of the 50S ribosomal subunit.

Functionally, this protein binds specifically to 23S rRNA; its binding is stimulated by other ribosomal proteins, e.g. L4, L17, and L20. It is important during the early stages of 50S assembly. It makes multiple contacts with different domains of the 23S rRNA in the assembled 50S subunit and ribosome. The globular domain of the protein is located near the polypeptide exit tunnel on the outside of the subunit, while an extended beta-hairpin is found that lines the wall of the exit tunnel in the center of the 70S ribosome. This chain is Large ribosomal subunit protein uL22, found in Anaeromyxobacter dehalogenans (strain 2CP-1 / ATCC BAA-258).